Here is a 381-residue protein sequence, read N- to C-terminus: Arrestin homolog (381 aa).

This sequence belongs to the arrestin family.

The polypeptide is Arrestin homolog (Heliothis virescens (Tobacco budworm moth)).